Reading from the N-terminus, the 344-residue chain is Tripartite motif-containing protein 44 (344 aa).

Disordered regions lie at residues 1–25 and 68–165; these read MASG…EPDE and TPPA…EFDP. Basic and acidic residues predominate over residues 75-92; the sequence is GAGKEEAEVKVEQEREIE. Residues 93 to 165 are compositionally biased toward acidic residues; it reads SEAGEESESE…ETEAESEFDP (73 aa). Residues 174–215 form a B box-type zinc finger; it reads VAKRKCPDHGLDLSTYCQEDRQLICVLCPVIGAHQGHQLSTL. Zn(2+) contacts are provided by Cys-179, His-182, Cys-201, and His-207. Residues 290-325 adopt a coiled-coil conformation; sequence AHVTEILADIQSHMDRLMTQMAQAKEQLDTSNESAE. A disordered region spans residues 309–344; sequence QMAQAKEQLDTSNESAEPKAEGDEEGPSGASEEEDT. Acidic residues predominate over residues 330–344; the sequence is GDEEGPSGASEEEDT. Phosphoserine occurs at positions 336 and 339.

Interacts (via coiled coil) with TRIM17 (via coiled coil).

May play a role in the process of differentiation and maturation of neuronal cells. May regulate the activity of TRIM17. Is a negative regulator of PAX6 expression. The chain is Tripartite motif-containing protein 44 (TRIM44) from Pongo abelii (Sumatran orangutan).